The sequence spans 68 residues: Small ribosomal subunit protein bS18c (68 aa).

Belongs to the bacterial ribosomal protein bS18 family. As to quaternary structure, part of the 30S ribosomal subunit.

Its subcellular location is the plastid. The protein localises to the chloroplast. This is Small ribosomal subunit protein bS18c (rps18) from Cyanidium caldarium (Red alga).